The following is a 178-amino-acid chain: Extracellular fatty acid-binding protein (178 aa).

The signal sequence occupies residues 1–20 (MRTLALSLGLALLCLLHAKA). Enterobactin is bound at residue T43. 1-tetradecanoyl-sn-glycerol 3-phosphate contacts are provided by Y72 and K104. An intrachain disulfide couples C80 to C173. 3 residues coordinate enterobactin: K104, R123, and R134. A 1-tetradecanoyl-sn-glycerol 3-phosphate-binding site is contributed by 134 to 136 (RLY).

It belongs to the calycin superfamily. Lipocalin family. In terms of assembly, monomer.

The protein localises to the secreted. Functionally, siderocalin-like lipocalin tightly binding a variety of bacterial ferric siderophores, also binds long-chain unsaturated fatty acids such as linoleic acid, oleic acid, arachidonic acid and, with a lower affinity, long chain saturated fatty acids such as steraic acid. May act as an antibacterial factor, through dual ligand specificity, both as a siderophore-sequestrating molecule and a lysophosphatidic acid (LPA) sensor. The sequence is that of Extracellular fatty acid-binding protein from Coturnix japonica (Japanese quail).